An 82-amino-acid polypeptide reads, in one-letter code: UPF0335 protein pRhico085 (82 aa).

It belongs to the UPF0335 family.

The chain is UPF0335 protein pRhico085 from Azospirillum brasilense.